We begin with the raw amino-acid sequence, 379 residues long: UDP-4-amino-4-deoxy-L-arabinose--oxoglutarate aminotransferase (379 aa).

Lysine 182 bears the N6-(pyridoxal phosphate)lysine mark.

This sequence belongs to the DegT/DnrJ/EryC1 family. ArnB subfamily. In terms of assembly, homodimer. Requires pyridoxal 5'-phosphate as cofactor.

The catalysed reaction is UDP-4-amino-4-deoxy-beta-L-arabinose + 2-oxoglutarate = UDP-beta-L-threo-pentopyranos-4-ulose + L-glutamate. It participates in nucleotide-sugar biosynthesis; UDP-4-deoxy-4-formamido-beta-L-arabinose biosynthesis; UDP-4-deoxy-4-formamido-beta-L-arabinose from UDP-alpha-D-glucuronate: step 2/3. The protein operates within bacterial outer membrane biogenesis; lipopolysaccharide biosynthesis. Its function is as follows. Catalyzes the conversion of UDP-4-keto-arabinose (UDP-Ara4O) to UDP-4-amino-4-deoxy-L-arabinose (UDP-L-Ara4N). The modified arabinose is attached to lipid A and is required for resistance to polymyxin and cationic antimicrobial peptides. The chain is UDP-4-amino-4-deoxy-L-arabinose--oxoglutarate aminotransferase from Erwinia tasmaniensis (strain DSM 17950 / CFBP 7177 / CIP 109463 / NCPPB 4357 / Et1/99).